The following is a 313-amino-acid chain: Olfactory receptor 10G3 (313 aa).

At 1-25 the chain is on the extracellular side; it reads MERINSTLLTAFILTGIPYPLRLRT. The N-linked (GlcNAc...) asparagine glycan is linked to Asn5. Residues 26 to 46 form a helical membrane-spanning segment; the sequence is LFFVFFFLIYILTQLGNLLIL. Residues 47-54 lie on the Cytoplasmic side of the membrane; that stretch reads ITVWADPR. The helical transmembrane segment at 55 to 76 threads the bilayer; the sequence is LHARPMYIFLGVLSVIDMSISS. Topologically, residues 77-100 are extracellular; sequence IIVPRLMMNFTLGVKPIPFGGCVA. Residue Asn85 is glycosylated (N-linked (GlcNAc...) asparagine). A disulfide bond links Cys98 and Cys190. Residues 101-121 traverse the membrane as a helical segment; it reads QLYFYHFLGSTQCFLYTLMAY. Residues 122 to 140 lie on the Cytoplasmic side of the membrane; it reads DRYLAICQPLRYPVLMTAK. A helical transmembrane segment spans residues 141–161; it reads LSALLVAGAWMAGSIHGALQA. Over 162-198 the chain is Extracellular; it reads ILTFRLPYCGPNQVDYFFCDIPAVLRLACADTTVNEL. A helical membrane pass occupies residues 199 to 218; that stretch reads VTFVDIGVVVASCFSLILLS. Over 219–238 the chain is Cytoplasmic; that stretch reads YIQIIQAILRIHTADGRRRA. The chain crosses the membrane as a helical span at residues 239-259; it reads FSTCGAHVTVVTVYYVPCAFI. Topologically, residues 260-270 are extracellular; it reads YLRPETNSPLD. The helical transmembrane segment at 271-291 threads the bilayer; it reads GAAALVPTAITPFLNPLIYTL. At 292 to 313 the chain is on the cytoplasmic side; that stretch reads RNQEVKLALKRMLRSPRTPSEV.

The protein belongs to the G-protein coupled receptor 1 family.

It is found in the cell membrane. In terms of biological role, odorant receptor. This chain is Olfactory receptor 10G3 (OR10G3), found in Homo sapiens (Human).